The following is a 529-amino-acid chain: Probable anion transporter 1, chloroplastic (529 aa).

The transit peptide at Met1–Arg55 directs the protein to the chloroplast. Disordered stretches follow at residues Val13–Gly39 and Thr52–Gly78. Residues Pro28 to Gly39 show a composition bias toward gly residues. Residues Arg67 to Gly76 show a composition bias toward basic and acidic residues. The next 11 membrane-spanning stretches (helical) occupy residues Trp120–Met140, Val158–Ile178, Thr187–Ala207, Leu209–Met229, Leu251–Ile271, Phe274–Trp294, Val340–Trp360, Leu378–Ala398, Ile418–Met438, Ala469–Ala489, and Val503–Thr523.

It belongs to the major facilitator superfamily. Sodium/anion cotransporter (TC 2.A.1.14) family.

Its subcellular location is the plastid. The protein resides in the chloroplast membrane. Probable anion transporter. This Oryza sativa subsp. japonica (Rice) protein is Probable anion transporter 1, chloroplastic (PHT4;1).